A 166-amino-acid polypeptide reads, in one-letter code: Putative esterase sll0410 (166 aa).

Asp45 is a catalytic residue.

This sequence belongs to the 4-hydroxybenzoyl-CoA thioesterase family.

This chain is Putative esterase sll0410, found in Synechocystis sp. (strain ATCC 27184 / PCC 6803 / Kazusa).